Reading from the N-terminus, the 293-residue chain is MTNSKNRFGNKFIGAHVSAAGGVDNAPLRAREIGANAFALFTKNQRQWVAKPLEEKTISAFKANCALLGFSPQQILPHDSYLINLGAPEAEKLEKSRLAFIDEMERCQLLGLNLLNFHPGSHLEKISEKACLSLIAESINLAHQAVPDVVAVIENTAGQGSNLGWRFEHLAEIIEQVEDKSRVGVCLDTCHTFAAGYDLRTPEACETTFAEFERVVGMHYLRAMHINDSKVKLASKVDRHHALGKGEIGWDCFEYIAKDSRFDSIPLILETIEPELWPQEIEQLRKYHLSSIA.

Positions 78, 118, 154, 188, 191, 225, 238, 240, and 270 each coordinate Zn(2+).

It belongs to the AP endonuclease 2 family. Requires Zn(2+) as cofactor.

It carries out the reaction Endonucleolytic cleavage to 5'-phosphooligonucleotide end-products.. In terms of biological role, endonuclease IV plays a role in DNA repair. It cleaves phosphodiester bonds at apurinic or apyrimidinic (AP) sites, generating a 3'-hydroxyl group and a 5'-terminal sugar phosphate. The chain is Probable endonuclease 4 from Vibrio vulnificus (strain CMCP6).